The chain runs to 145 residues: Large ribosomal subunit protein uL11 (145 aa).

This sequence belongs to the universal ribosomal protein uL11 family. As to quaternary structure, part of the ribosomal stalk of the 50S ribosomal subunit. Interacts with L10 and the large rRNA to form the base of the stalk. L10 forms an elongated spine to which L12 dimers bind in a sequential fashion forming a multimeric L10(L12)X complex. One or more lysine residues are methylated.

Functionally, forms part of the ribosomal stalk which helps the ribosome interact with GTP-bound translation factors. This chain is Large ribosomal subunit protein uL11, found in Rubrobacter xylanophilus (strain DSM 9941 / JCM 11954 / NBRC 16129 / PRD-1).